We begin with the raw amino-acid sequence, 184 residues long: Lactoylglutathione lyase (184 aa).

Residue Ala2 is modified to N-acetylalanine. Residues Cys19 and Cys20 are joined by a disulfide bond. In terms of domain architecture, VOC spans 31–177 (LLQQTMLRVK…DGYWIEILNP (147 aa)). Substrate-binding residues include Gln34 and Arg38. Gln34 provides a ligand contact to Zn(2+). Cysteines 61 and 139 form a disulfide. N6-succinyllysine is present on Lys88. Glu100 is a Zn(2+) binding site. Substrate is bound at residue Asn104. Thr107 is modified (phosphothreonine). Arg123 and His127 together coordinate substrate. His127 contributes to the Zn(2+) binding site. Residue Cys139 is modified to S-glutathionyl cysteine; alternate. Lys148 carries the N6-acetyllysine; alternate modification. N6-succinyllysine; alternate is present on Lys148. 157–158 (KM) is a substrate binding site. Glu173 provides a ligand contact to Zn(2+). The Proton donor/acceptor role is filled by Glu173.

The protein belongs to the glyoxalase I family. In terms of assembly, homodimer. The cofactor is Zn(2+). Glutathionylation at Cys-139 inhibits enzyme activity. Post-translationally, phosphorylated at Thr-107 in the presence of CaMK2. However, this is a consensus site for phosphorylation by CK2 so phosphorylation may be mediated by CK2 rather than CaMK2. Phosphorylation is induced by TNF and suppresses the TNF-induced transcriptional activity of NF-kappa-B. In terms of processing, exists in a nitric oxide (NO)-modified form. The exact nature of the modification is unknown, but it suppresses the TNF-induced transcriptional activity of NF-kappa-B.

The catalysed reaction is (R)-S-lactoylglutathione = methylglyoxal + glutathione. The protein operates within secondary metabolite metabolism; methylglyoxal degradation; (R)-lactate from methylglyoxal: step 1/2. Its activity is regulated as follows. Regulated by oxidation of Cys-139 in response to the redox state of the cell. Results in the alternative formation of cystine or glutathione-bound cysteine, the latter modification leading to reduced enzyme activity. Functionally, catalyzes the conversion of hemimercaptal, formed from methylglyoxal and glutathione, to S-lactoylglutathione. Involved in the regulation of TNF-induced transcriptional activity of NF-kappa-B. Required for normal osteoclastogenesis. The chain is Lactoylglutathione lyase (GLO1) from Homo sapiens (Human).